The chain runs to 256 residues: Putative transcription factor 001R (256 aa).

In terms of biological role, transcription activation. The polypeptide is Putative transcription factor 001R (Frog virus 3 (isolate Goorha) (FV-3)).